We begin with the raw amino-acid sequence, 309 residues long: GTP cyclohydrolase MptA (309 aa).

The protein belongs to the GTP cyclohydrolase IV family. In terms of assembly, homodimer. Requires Fe(2+) as cofactor.

It catalyses the reaction GTP + H2O = 7,8-dihydroneopterin 2',3'-cyclic phosphate + formate + diphosphate + H(+). It participates in cofactor biosynthesis; 5,6,7,8-tetrahydromethanopterin biosynthesis. In terms of biological role, converts GTP to 7,8-dihydro-D-neopterin 2',3'-cyclic phosphate, the first intermediate in the biosynthesis of coenzyme methanopterin. This chain is GTP cyclohydrolase MptA, found in Haloarcula marismortui (strain ATCC 43049 / DSM 3752 / JCM 8966 / VKM B-1809) (Halobacterium marismortui).